The sequence spans 2202 residues: Activating signal cointegrator 1 complex subunit 3 (2202 aa).

The interval 1–400 (MALPRLTGAL…RQRDADVEKI (400 aa)) is required for interaction with ASCC2. A Phosphoserine modification is found at S12. Coiled coils occupy residues 18-79 (KQDN…AAKQ) and 328-356 (IQSE…KAGE). The region spanning 486–669 (ETAYNTNENM…FLHVNPYIGL (184 aa)) is the Helicase ATP-binding 1 domain. Residue 499–506 (APTGAGKT) participates in ATP binding. The residue at position 572 (K572) is an N6-acetyllysine. The DEVH box motif lies at 611-614 (DEVH). The 187-residue stretch at 728 to 914 (TVRTAMSLIE…GTVTNVEEAV (187 aa)) folds into the Helicase C-terminal 1 domain. One can recognise an SEC63 1 domain in the interval 978-1287 (STDLGRTASH…GAEAVCIINF (310 aa)). The region spanning 1336-1511 (HTLYHTDCNV…WLNIKQMGLF (176 aa)) is the Helicase ATP-binding 2 domain. An ATP-binding site is contributed by 1349 to 1356 (APTGSGKT). The DEIH box signature appears at 1453-1456 (DEIH). The region spanning 1544–1739 (PAFQAIRSHS…VLSDHLNAEI (196 aa)) is the Helicase C-terminal 2 domain. The SEC63 2 domain maps to 1812 to 2176 (PLTYGRIASY…LGLDQQYDIY (365 aa)). S2195 carries the phosphoserine modification.

Belongs to the helicase family. In terms of assembly, identified in the ASCC complex that contains ASCC1, ASCC2 and ASCC3. Functions as scaffolding subunit that interacts directly with both ASCC1 and ASCC2. Interacts directly with ALKBH3, and thereby recruits ALKBH3 to the ASCC complex. Part of the ASC-1/TRIP4 complex, that contains TRIP4, ASCC1, ASCC2 and ASCC3. Part of the RQT (ribosome quality control trigger) complex, that contains ASCC2, ASCC3 and TRIP4. Associates with ribosomes; recruited to collided ribosomes. Interacts with ZCCHC4. Interacts with ZNF598. Interacts with RPS3. In terms of tissue distribution, ubiquitous.

It localises to the nucleus. Its subcellular location is the nucleus speckle. It is found in the cytoplasm. The protein localises to the cytosol. It carries out the reaction Couples ATP hydrolysis with the unwinding of duplex DNA by translocating in the 3'-5' direction.. It catalyses the reaction ATP + H2O = ADP + phosphate + H(+). Functionally, ATPase involved both in DNA repair and rescue of stalled ribosomes. 3'-5' DNA helicase involved in repair of alkylated DNA: promotes DNA unwinding to generate single-stranded substrate needed for ALKBH3, enabling ALKBH3 to process alkylated N3-methylcytosine (3mC) within double-stranded regions. Also involved in activation of the ribosome quality control (RQC) pathway, a pathway that degrades nascent peptide chains during problematic translation. Drives the splitting of stalled ribosomes that are ubiquitinated in a ZNF598-dependent manner, as part of the ribosome quality control trigger (RQT) complex. Part of the ASC-1 complex that enhances NF-kappa-B, SRF and AP1 transactivation. The sequence is that of Activating signal cointegrator 1 complex subunit 3 (ASCC3) from Homo sapiens (Human).